The sequence spans 368 residues: CST complex subunit STN1 (368 aa).

Residues 1–185 form an interaction with CTC1 region; that stretch reads MQPGSSRCEE…KIYDQPFRSS (185 aa). Positions 57-155 form a DNA-binding region, OB; it reads VDVLGTVVGV…EIHATAYYKV (99 aa). Winged helix-turn-helix (wHTH) stretches follow at residues 191 to 295 and 296 to 368; these read EALS…YVTR and EDKD…YTAF.

Belongs to the STN1 family. Component of the CST complex, composed of TEN1/C17orf106, CTC1/C17orf68 and STN1; in the complex interacts directly with TEN1 and CTC1. Interacts with ACD/TPP1, POT1 and POLA1.

Its subcellular location is the nucleus. It is found in the chromosome. It localises to the telomere. Its function is as follows. Component of the CST complex proposed to act as a specialized replication factor promoting DNA replication under conditions of replication stress or natural replication barriers such as the telomere duplex. The CST complex binds single-stranded DNA with high affinity in a sequence-independent manner, while isolated subunits bind DNA with low affinity by themselves. Initially the CST complex has been proposed to protect telomeres from DNA degradation. However, the CST complex has been shown to be involved in several aspects of telomere replication. The CST complex inhibits telomerase and is involved in telomere length homeostasis; it is proposed to bind to newly telomerase-synthesized 3' overhangs and to terminate telomerase action implicating the association with the ACD:POT1 complex thus interfering with its telomerase stimulation activity. The CST complex is also proposed to be involved in fill-in synthesis of the telomeric C-strand probably implicating recruitment and activation of DNA polymerase alpha. The CST complex facilitates recovery from many forms of exogenous DNA damage; seems to be involved in the re-initiation of DNA replication at repaired forks and/or dormant origins. Required for efficicient replication of the duplex region of the telomere. Promotes efficient replication of lagging-strand telomeres. Promotes general replication start following replication-fork stalling implicating new origin firing. May be in involved in C-strand fill-in during late S/G2 phase independent of its role in telomere duplex replication. This is CST complex subunit STN1 from Macaca fascicularis (Crab-eating macaque).